Consider the following 159-residue polypeptide: uncharacterized protein (159 aa).

Residues 1–13 are compositionally biased toward polar residues; sequence MTQPTRPSVTCDQ. Positions 1 to 57 are disordered; it reads MTQPTRPSVTCDQGSSTIGGTAAQATTSSSATSGSNYQRDRLGRRPEIGVGGQPQIC. A compositionally biased stretch (low complexity) spans 14–35; that stretch reads GSSTIGGTAAQATTSSSATSGS. A compositionally biased stretch (basic and acidic residues) spans 38 to 47; that stretch reads QRDRLGRRPE.

This is an uncharacterized protein from Homo sapiens (Human).